The chain runs to 891 residues: DNA mismatch repair protein MutS (891 aa).

634-641 contributes to the ATP binding site; the sequence is GPNMGGKS.

The protein belongs to the DNA mismatch repair MutS family.

In terms of biological role, this protein is involved in the repair of mismatches in DNA. It is possible that it carries out the mismatch recognition step. This protein has a weak ATPase activity. In Burkholderia mallei (strain NCTC 10247), this protein is DNA mismatch repair protein MutS.